Here is a 163-residue protein sequence, read N- to C-terminus: Outer membrane protein assembly factor BamE (163 aa).

The signal sequence occupies residues 1–22; it reads MINKKQSLTLLSAIALSVSLSA. The N-palmitoyl cysteine moiety is linked to residue Cys-23. Cys-23 carries the S-diacylglycerol cysteine lipid modification. The disordered stretch occupies residues 122–163; sequence EQSKLPMVNTTESAPQVPAQRPDEKPLVKENQTEAQVQKPIK. Residues 142 to 153 show a composition bias toward basic and acidic residues; that stretch reads RPDEKPLVKENQ.

The protein belongs to the BamE family. Part of the Bam complex.

It localises to the cell outer membrane. Functionally, part of the outer membrane protein assembly complex, which is involved in assembly and insertion of beta-barrel proteins into the outer membrane. This Shewanella oneidensis (strain ATCC 700550 / JCM 31522 / CIP 106686 / LMG 19005 / NCIMB 14063 / MR-1) protein is Outer membrane protein assembly factor BamE.